A 473-amino-acid polypeptide reads, in one-letter code: MSPQTETKASVGFKAGLKEYKLTYYTPQYETKDTDILAAFRVTPQPGVPPEEAGAAVAAESSTGTWTTVWTDGLTSLDRYKGRCYHIEPVPGEKDQYICYAAYPLDLFEEGSVTNMFTSIVGNVFGFKALRALRLEDLRIPVAYVKTFQGPPHGIQVERDKLNKYGRPLLGCTIKPKLGLSAKNYGRAVYECLRGGLDFTKDDENVNSQPFMRWRDRFLFCAEAIYKSQAETGEIKGHYLNATAGTCEEMIKRAIFARELGVPMLMHDYLTGGFTANTSLAHYCRDNGLLLHIHRAMHAVIDRQKNHGMHFRVLAKALRLSGGDHIHSGTVVGKLEGERDITLGFVDLLRDDFIEKDRSRGIYFTQDWVSLPGVIPVASGGIHVWHMPALTEIFGDDSVLQFGGGTLGHPWGNAPGAVANRVAVEACVKARNEGRDLAAEGNAIIREACKWSPELAAACEVWKEIKFEFPAMD.

Positions 1 to 2 (MS) are excised as a propeptide. Proline 3 is subject to N-acetylproline. Lysine 14 carries the post-translational modification N6,N6,N6-trimethyllysine. Substrate contacts are provided by asparagine 123 and threonine 173. The Proton acceptor role is filled by lysine 175. Substrate is bound at residue lysine 177. Mg(2+) is bound by residues lysine 201, aspartate 203, and glutamate 204. An N6-carboxylysine modification is found at lysine 201. The Proton acceptor role is filled by histidine 294. Positions 295, 327, and 379 each coordinate substrate.

Belongs to the RuBisCO large chain family. Type I subfamily. In terms of assembly, heterohexadecamer of 8 large chains and 8 small chains; disulfide-linked. The disulfide link is formed within the large subunit homodimers. It depends on Mg(2+) as a cofactor. The disulfide bond which can form in the large chain dimeric partners within the hexadecamer appears to be associated with oxidative stress and protein turnover.

It is found in the plastid. The protein localises to the chloroplast. It carries out the reaction 2 (2R)-3-phosphoglycerate + 2 H(+) = D-ribulose 1,5-bisphosphate + CO2 + H2O. The enzyme catalyses D-ribulose 1,5-bisphosphate + O2 = 2-phosphoglycolate + (2R)-3-phosphoglycerate + 2 H(+). RuBisCO catalyzes two reactions: the carboxylation of D-ribulose 1,5-bisphosphate, the primary event in carbon dioxide fixation, as well as the oxidative fragmentation of the pentose substrate in the photorespiration process. Both reactions occur simultaneously and in competition at the same active site. This chain is Ribulose bisphosphate carboxylase large chain, found in Monarda didyma (Scarlet bee-balm).